Reading from the N-terminus, the 229-residue chain is MIDHQHLRLFQFCDSQFPTGAFSHSFGLETYIQRETVHDTETFIKWLHLFINEQLTYSDGIAMRIVYHALINNDKDKILDINQKLFVQNLPKETRIGAKQMGTRMVKLALDLYDSEWIQWYYNQMKNNKIKLHPAVCFTMLGHFLGVDVESIIDYYLYQNISSLTQNAVRAIPLGQTAGQQVVTEMIAHIEKTRNHILELDEIDFGMTAPGLELNQMEHENVHVRIFIS.

Belongs to the UreF family. As to quaternary structure, ureD, UreF and UreG form a complex that acts as a GTP-hydrolysis-dependent molecular chaperone, activating the urease apoprotein by helping to assemble the nickel containing metallocenter of UreC. The UreE protein probably delivers the nickel.

The protein resides in the cytoplasm. Required for maturation of urease via the functional incorporation of the urease nickel metallocenter. This is Urease accessory protein UreF from Staphylococcus epidermidis (strain ATCC 12228 / FDA PCI 1200).